A 206-amino-acid polypeptide reads, in one-letter code: Protein GET1 (206 aa).

The Lumenal portion of the chain corresponds to 1–4 (MPSL). Residues 5-24 (LITVLFLNVIIYVINTVGAA) traverse the membrane as a helical segment. The Cytoplasmic segment spans residues 25-110 (TVDGLLWLLY…TFDMTIKIAR (86 aa)). A coiled-coil region spans residues 75–100 (AKLRRRHDKAMEAYEAKNNELTQSKS). A helical membrane pass occupies residues 111 to 131 (WAATSGLMLFLQFWYSKTPIF). Topologically, residues 132-155 (TLPPGWIPWQVQWVLSFPRAPMGT) are lumenal. Residues 156–172 (VSIQIWGGACATVVALV) traverse the membrane as a helical segment. Over 173–206 (GDAMRASLAYVSKPKIDRIKLGATMEGKEGKKRQ) the chain is Cytoplasmic.

This sequence belongs to the WRB/GET1 family. As to quaternary structure, interacts with GET3.

Its subcellular location is the endoplasmic reticulum membrane. In terms of biological role, required for the post-translational delivery of tail-anchored (TA) proteins to the endoplasmic reticulum. Acts as a membrane receptor for soluble GET3, which recognizes and selectively binds the transmembrane domain of TA proteins in the cytosol. This chain is Protein GET1, found in Ajellomyces capsulatus (strain NAm1 / WU24) (Darling's disease fungus).